The chain runs to 465 residues: UDP-N-acetylmuramate--L-alanine ligase (465 aa).

Residue 114–120 (GTHGKTT) participates in ATP binding.

This sequence belongs to the MurCDEF family.

It is found in the cytoplasm. The enzyme catalyses UDP-N-acetyl-alpha-D-muramate + L-alanine + ATP = UDP-N-acetyl-alpha-D-muramoyl-L-alanine + ADP + phosphate + H(+). It participates in cell wall biogenesis; peptidoglycan biosynthesis. In terms of biological role, cell wall formation. The sequence is that of UDP-N-acetylmuramate--L-alanine ligase from Chelativorans sp. (strain BNC1).